We begin with the raw amino-acid sequence, 370 residues long: Apolipoprotein A-V (370 aa).

An N-terminal signal peptide occupies residues 1–21 (MASMIALLTWALALLPALASA). The residue at position 59 (S59) is a Phosphoserine.

The protein belongs to the apolipoprotein A1/A4/E family. Interacts with GPIHBP1. Interacts with SORL1; this interaction leads to APOA5 internalization and sorting either to lysosomes and degradation, or to the trans-Golgi network.

It is found in the secreted. Its subcellular location is the early endosome. It localises to the late endosome. The protein resides in the golgi apparatus. The protein localises to the trans-Golgi network. Functionally, minor apolipoprotein mainly associated with HDL and to a lesser extent with VLDL. May also be associated with chylomicrons. Important determinant of plasma triglyceride (TG) levels by both being a potent stimulator of apo-CII lipoprotein lipase (LPL) TG hydrolysis and an inhibitor of the hepatic VLDL-TG production rate (without affecting the VLDL-apoB production rate). Activates poorly lecithin:cholesterol acyltransferase (LCAT) and does not enhance efflux of cholesterol from macrophages. Binds heparin. The polypeptide is Apolipoprotein A-V (APOA5) (Acinonyx jubatus (Cheetah)).